A 631-amino-acid chain; its full sequence is Iron transport multicopper oxidase FET3 (631 aa).

An N-terminal signal peptide occupies residues 1–25; it reads MKVSTHHFLPSLLVALWSWATVAQA. Residues 26–564 lie on the Extracellular side of the membrane; that stretch reads ATHTFNWTTG…ANIPDGFTAK (539 aa). N-linked (GlcNAc...) asparagine glycans are attached at residues Asn-31 and Asn-81. Plastocyanin-like domains lie at 50-148 and 195-297; these read ITCN…LVVE and NLII…LMLN. Positions 85 and 87 each coordinate Cu cation. N-linked (GlcNAc...) asparagine glycosylation is found at Asn-92 and Asn-117. His-130 and His-132 together coordinate Cu cation. N-linked (GlcNAc...) asparagine glycans are attached at residues Asn-199, Asn-203, Asn-249, Asn-270, Asn-297, Asn-364, and Asn-413. Residues 387 to 506 form the Plastocyanin-like 3 domain; that stretch reads NPLVYGTNTN…QGLALLLIEA (120 aa). Cu cation-binding residues include His-418, His-421, His-423, His-488, Cys-489, His-490, and His-494. A helical membrane pass occupies residues 565 to 585; that stretch reads GIVAMTFSCLAGVLGLISLST. The Cytoplasmic portion of the chain corresponds to 586–630; it reads YGLMGVKKSEEEIIRDLGMDPDAVEKVDVSDINSDEDSSRTSKNI. A disordered region spans residues 610 to 631; it reads EKVDVSDINSDEDSSRTSKNIE. A compositionally biased stretch (basic and acidic residues) spans 622-631; sequence DSSRTSKNIE.

Belongs to the multicopper oxidase family. Requires Cu cation as cofactor.

It localises to the cell membrane. Functionally, iron transport multicopper ferroxidase required for Fe(2+) high affinity uptake. Required to oxidize Fe(2+) and release it from the transporter. Essential component of copper-dependent iron transport. The sequence is that of Iron transport multicopper oxidase FET3 (FET3) from Kluyveromyces lactis (strain ATCC 8585 / CBS 2359 / DSM 70799 / NBRC 1267 / NRRL Y-1140 / WM37) (Yeast).